The chain runs to 764 residues: Ergosteryl-beta-glucosidase (764 aa).

Catalysis depends on E515, which acts as the Nucleophile. Positions H588–H629 are disordered. T594 carries the post-translational modification Phosphothreonine. Positions P601–S622 are enriched in low complexity.

Belongs to the glycosyl hydrolase 5 (cellulase A) family.

The protein localises to the cytoplasm. It localises to the cytosol. The protein resides in the vacuole membrane. It catalyses the reaction ergosteryl 3-beta-D-glucoside + H2O = ergosterol + D-glucose. In terms of biological role, ergosteryl beta-glucosidase involved in the ergosteryl beta-glucoside (EG) catabolic pathway and vacuole formation via hydrolysis of EG to generate glucose. Is also able to hydrolyze cholesteryl beta-glucoside and sitosteryl beta-glucoside to generate glucose; and C6-7-nitro-2,1,3-benzoxadiazole (NBD)-GlcCer to generate C6-NBD-ceramide (Cer). The polypeptide is Ergosteryl-beta-glucosidase (Saccharomyces cerevisiae (strain ATCC 204508 / S288c) (Baker's yeast)).